Consider the following 604-residue polypeptide: uncharacterized protein (604 aa).

In terms of domain architecture, ABC transmembrane type-1 spans 49–332 (LILVMLMVVI…LANQFNTMLS (284 aa)). The next 4 helical transmembrane spans lie at 50 to 70 (ILVMLMVVISAIFGLLGPFVI), 86 to 106 (LIPVLLLLLAIYIIQSLSLWF), 172 to 192 (VITFVGTIAVMLYMSPLLTLI), and 288 to 308 (IAAIGGLFALKGWISIGSIVV). The 235-residue stretch at 366–600 (IEFRDVSFGY…KGFYSDLYES (235 aa)) folds into the ABC transporter domain. 399-406 (GPTGAGKT) provides a ligand contact to ATP. The chain crosses the membrane as a helical span at residues 510-530 (LISIARAVLADPVLLILDEAT).

This sequence belongs to the ABC transporter superfamily.

The protein localises to the cell membrane. This is an uncharacterized protein from Bacillus subtilis (strain 168).